A 261-amino-acid polypeptide reads, in one-letter code: tRNA pseudouridine synthase A (261 aa).

Catalysis depends on D52, which acts as the Nucleophile. Y110 is a binding site for substrate.

The protein belongs to the tRNA pseudouridine synthase TruA family. Homodimer.

It catalyses the reaction uridine(38/39/40) in tRNA = pseudouridine(38/39/40) in tRNA. In terms of biological role, formation of pseudouridine at positions 38, 39 and 40 in the anticodon stem and loop of transfer RNAs. This is tRNA pseudouridine synthase A from Blochmanniella pennsylvanica (strain BPEN).